The sequence spans 488 residues: Glutamyl-tRNA(Gln) amidotransferase subunit A (488 aa).

Catalysis depends on charge relay system residues Lys77 and Ser152. Ser176 functions as the Acyl-ester intermediate in the catalytic mechanism.

It belongs to the amidase family. GatA subfamily. Heterotrimer of A, B and C subunits.

The catalysed reaction is L-glutamyl-tRNA(Gln) + L-glutamine + ATP + H2O = L-glutaminyl-tRNA(Gln) + L-glutamate + ADP + phosphate + H(+). In terms of biological role, allows the formation of correctly charged Gln-tRNA(Gln) through the transamidation of misacylated Glu-tRNA(Gln) in organisms which lack glutaminyl-tRNA synthetase. The reaction takes place in the presence of glutamine and ATP through an activated gamma-phospho-Glu-tRNA(Gln). The protein is Glutamyl-tRNA(Gln) amidotransferase subunit A of Streptococcus suis (strain 05ZYH33).